The following is a 168-amino-acid chain: Gremlin-2 (168 aa).

An N-terminal signal peptide occupies residues 1–21; sequence MFWKLSLSLFLVAVLVKVAEA. An N-linked (GlcNAc...) asparagine glycan is attached at asparagine 40. 4 disulfide bridges follow: cysteine 73–cysteine 123, cysteine 87–cysteine 137, cysteine 97–cysteine 155, and cysteine 101–cysteine 157. The CTCK domain maps to 73–163; that stretch reads CKTQPLRQTV…QCRCMSVNLS (91 aa). Asparagine 161 carries N-linked (GlcNAc...) asparagine glycosylation.

It belongs to the DAN family. As to quaternary structure, homodimer. Interacts with BMP2, BMP4 and BMP7, but has lower affinity for BMP7 than for BMP2 and BMP4. Binds heparin; this impairs the interaction with BMP2. In terms of processing, N-glycosylated.

It localises to the secreted. Functionally, cytokine that inhibits the activity of BMP2 and BMP4 in a dose-dependent manner, and thereby modulates signaling by BMP family members. Contributes to the regulation of embryonic morphogenesis via BMP family members. Antagonizes BMP4-induced suppression of progesterone production in granulosa cells. This Homo sapiens (Human) protein is Gremlin-2 (GREM2).